Reading from the N-terminus, the 440-residue chain is Frizzled/smoothened-like sans CRD protein D (440 aa).

The first 27 residues, 1–27 (MFIILKFLISFFLICNFFNYNDHFASG), serve as a signal peptide directing secretion. Residues 28–85 (QTLPPGFCPSPLIYRNSTNRQNDIENGYLFIGQTNCTSPCPSLIFSENEWHRVYNMSL) lie on the Extracellular side of the membrane. Residues Asn43, Asn62, and Asn82 are each glycosylated (N-linked (GlcNAc...) asparagine). Residues 86-106 (IAGTISMFALIFLIITYSPLV) form a helical membrane-spanning segment. The Cytoplasmic portion of the chain corresponds to 107 to 110 (NKYN). Residues 111-131 (GYTRHTVGILFLFCGIFLTVT) form a helical membrane-spanning segment. The Extracellular portion of the chain corresponds to 132-162 (TDGRQLWDIDLGFEKYCPEPGRFARQSDTKC). A helical membrane pass occupies residues 163-183 (LVTAIFFQYGCVTSILWWAAI). The Cytoplasmic segment spans residues 184–200 (SVDLWMTIRKVKISKLQ). Residues 201 to 221 (FITYAVILNIITLILTFAPIA) traverse the membrane as a helical segment. The Extracellular portion of the chain corresponds to 222 to 244 (SKQYGYGEAAIGCWLMDLKYQVG). The chain crosses the membrane as a helical span at residues 245 to 265 (YFWAPVGFCLCVGCVSIVLII). Residues 266–285 (REIYKVSDAIKKKLLAKHLK) are Cytoplasmic-facing. A helical transmembrane segment spans residues 286–306 (PLMLIILMLSEFIYMFIFYSY). The Extracellular portion of the chain corresponds to 307–346 (TTSRRGHYHDVVEKYIRCLFINASNPSICEVDVSISSPAH). Asn328 carries an N-linked (GlcNAc...) asparagine glycan. Residues 347 to 367 (FFFHFCMRLMGIEGLIFFGFT) traverse the membrane as a helical segment. Residues 368–440 (RQTKRIWLRS…IELSGVDSKN (73 aa)) are Cytoplasmic-facing. A disordered region spans residues 395–428 (ISSDEKTSNSSHRTTRGCRETEFGESIEQSNDPE).

This sequence belongs to the G-protein coupled receptor Fz/Smo family.

It is found in the membrane. In Dictyostelium discoideum (Social amoeba), this protein is Frizzled/smoothened-like sans CRD protein D (fscD).